We begin with the raw amino-acid sequence, 378 residues long: Alanine dehydrogenase (378 aa).

R15 and K74 together coordinate substrate. H95 serves as the catalytic Proton donor/acceptor. NAD(+) contacts are provided by residues S132, 176 to 177, D196, S218, 237 to 238, 265 to 268, and 297 to 300; these read VV, VL, VAID, and VANM. Catalysis depends on D268, which acts as the Proton donor/acceptor.

It belongs to the AlaDH/PNT family. Homohexamer. Trimer of dimer.

Its subcellular location is the cytoplasm. The catalysed reaction is L-alanine + NAD(+) + H2O = pyruvate + NH4(+) + NADH + H(+). Its pathway is amino-acid degradation; L-alanine degradation via dehydrogenase pathway; NH(3) and pyruvate from L-alanine: step 1/1. Catalyzes the reversible oxidative deamination of L-alanine to pyruvate. Oxidative deamination proceeds through a sequential, ordered ternary-binary mechanism, where NAD(+) binds first followed by L-alanine; the products are released in the order ammonia, pyruvate and NADH. Disruption blocks sporulation probably in stage V; 20-30% sporulation can be restored if the media is supplemented with pyruvate, suggesting lack of pyruvate blocks sporulation. Thus it is a key factor in the assimilation of L-alanine as an energy source via the tricarboxylic acid cycle during sporulation. The chain is Alanine dehydrogenase from Bacillus subtilis (strain 168).